The sequence spans 288 residues: Nucleotide-binding protein Neut_1559 (288 aa).

ATP is bound at residue 8 to 15; that stretch reads GLSGSGKS. Position 57–60 (57–60) interacts with GTP; the sequence is DMRS.

This sequence belongs to the RapZ-like family.

Displays ATPase and GTPase activities. The sequence is that of Nucleotide-binding protein Neut_1559 from Nitrosomonas eutropha (strain DSM 101675 / C91 / Nm57).